Consider the following 320-residue polypeptide: MKPSVILYKKIADDLRARLDQHFTVTELDAFPSLDHPALATAEGIIGSGGKVDKDFLQHAPRLRAASTISVGYDTFNVDALNEKGVILMHTPTVLTETVADTVLALMLASARRVVEVAERVKAGEWKGGVDSDWFGTDVHHKTIGILGMGRIGLAVAQRAHFGFSMPVLYNARRHHAEAEQRFNARHCDLDTLLAESDFLCITLPLTTETHHLIGREQLAKMKPSAILINIGRGAVVDEDALTEALVKGTIQGAGLDVFVKEPLPVDSPLLDLPNVVALPHIGSATHETRYDMAACAVDNLIAALSGEVKENCVNPQVLK.

Residues Arg233 and Glu262 contribute to the active site. His281 functions as the Proton donor in the catalytic mechanism.

Belongs to the D-isomer specific 2-hydroxyacid dehydrogenase family. GhrB subfamily. As to quaternary structure, homodimer.

Its subcellular location is the cytoplasm. The catalysed reaction is glycolate + NADP(+) = glyoxylate + NADPH + H(+). It carries out the reaction (R)-glycerate + NAD(+) = 3-hydroxypyruvate + NADH + H(+). It catalyses the reaction (R)-glycerate + NADP(+) = 3-hydroxypyruvate + NADPH + H(+). Functionally, catalyzes the NADPH-dependent reduction of glyoxylate and hydroxypyruvate into glycolate and glycerate, respectively. In Pectobacterium carotovorum subsp. carotovorum (strain PC1), this protein is Glyoxylate/hydroxypyruvate reductase B.